A 426-amino-acid polypeptide reads, in one-letter code: Enolase (426 aa).

Glutamine 163 contributes to the (2R)-2-phosphoglycerate binding site. Residue glutamate 205 is the Proton donor of the active site. Positions 242, 286, and 313 each coordinate Mg(2+). (2R)-2-phosphoglycerate is bound by residues lysine 338, arginine 367, serine 368, and lysine 389. Catalysis depends on lysine 338, which acts as the Proton acceptor.

This sequence belongs to the enolase family. The cofactor is Mg(2+).

It localises to the cytoplasm. The protein resides in the secreted. Its subcellular location is the cell surface. The catalysed reaction is (2R)-2-phosphoglycerate = phosphoenolpyruvate + H2O. Its pathway is carbohydrate degradation; glycolysis; pyruvate from D-glyceraldehyde 3-phosphate: step 4/5. In terms of biological role, catalyzes the reversible conversion of 2-phosphoglycerate (2-PG) into phosphoenolpyruvate (PEP). It is essential for the degradation of carbohydrates via glycolysis. The sequence is that of Enolase from Helicobacter pylori (strain HPAG1).